The following is a 328-amino-acid chain: Protein chibby homolog 2 (328 aa).

The segment at 180-231 is disordered; the sequence is NKGASSVQKDTENTTAAGEGSLGPTCQEEHDAKEESTTPTQNDTKIAPSTED. The segment covering 182–195 has biased composition (polar residues); that stretch reads GASSVQKDTENTTA. Positions 206–215 are enriched in basic and acidic residues; that stretch reads QEEHDAKEES. The stretch at 259–307 forms a coiled coil; sequence RESLHALQDESKFFQEEYKKLKLQLNNVKNTVSDITTQMEMLEKELIAI.

Belongs to the chibby family. SPERT subfamily.

In Gallus gallus (Chicken), this protein is Protein chibby homolog 2 (CBY2).